The sequence spans 447 residues: Phosphoglucosamine mutase (447 aa).

Catalysis depends on serine 104, which acts as the Phosphoserine intermediate. 4 residues coordinate Mg(2+): serine 104, aspartate 243, aspartate 245, and aspartate 247. Serine 104 carries the phosphoserine modification.

The protein belongs to the phosphohexose mutase family. Requires Mg(2+) as cofactor. In terms of processing, activated by phosphorylation.

The catalysed reaction is alpha-D-glucosamine 1-phosphate = D-glucosamine 6-phosphate. In terms of biological role, catalyzes the conversion of glucosamine-6-phosphate to glucosamine-1-phosphate. The sequence is that of Phosphoglucosamine mutase from Corynebacterium efficiens (strain DSM 44549 / YS-314 / AJ 12310 / JCM 11189 / NBRC 100395).